Reading from the N-terminus, the 500-residue chain is Enolase (500 aa).

Substrate is bound by residues histidine 225 and glutamate 234. The active-site Proton donor is glutamate 277. The Mg(2+) site is built by aspartate 312, glutamate 361, and aspartate 386. Substrate is bound by residues glutamate 361 and aspartate 386. The active-site Proton acceptor is the lysine 411. Substrate is bound by residues 438–441 (SHRS) and lysine 462.

The protein belongs to the enolase family. As to quaternary structure, homodimer. The cofactor is Mg(2+).

Its subcellular location is the cytoplasm. It catalyses the reaction (2R)-2-phosphoglycerate = phosphoenolpyruvate + H2O. It functions in the pathway carbohydrate degradation; glycolysis; pyruvate from D-glyceraldehyde 3-phosphate: step 4/5. Enzyme of the glycolytic pathway. Glycolysis is essential in glial cells but not in neurons; neurons rely on the citric acid cycle for their energy needs, and on lactate and alanine secreted into the hemolymph by glial cells to fuel it. This Drosophila melanogaster (Fruit fly) protein is Enolase.